The sequence spans 429 residues: Enolase (429 aa).

Glutamine 166 is a binding site for (2R)-2-phosphoglycerate. Catalysis depends on glutamate 208, which acts as the Proton donor. Mg(2+) is bound by residues aspartate 245, glutamate 289, and aspartate 316. (2R)-2-phosphoglycerate-binding residues include lysine 341, arginine 370, serine 371, and lysine 392. Residue lysine 341 is the Proton acceptor of the active site.

Belongs to the enolase family. As to quaternary structure, component of the RNA degradosome, a multiprotein complex involved in RNA processing and mRNA degradation. Mg(2+) serves as cofactor.

The protein localises to the cytoplasm. The protein resides in the secreted. It is found in the cell surface. The enzyme catalyses (2R)-2-phosphoglycerate = phosphoenolpyruvate + H2O. It functions in the pathway carbohydrate degradation; glycolysis; pyruvate from D-glyceraldehyde 3-phosphate: step 4/5. Functionally, catalyzes the reversible conversion of 2-phosphoglycerate (2-PG) into phosphoenolpyruvate (PEP). It is essential for the degradation of carbohydrates via glycolysis. The sequence is that of Enolase from Acinetobacter baumannii (strain AB307-0294).